The chain runs to 62 residues: Protein translocase subunit SecE (62 aa).

A helical transmembrane segment spans residues 40–60; that stretch reads LLVLAVVGVLAYIIQLALTLI.

This sequence belongs to the SecE/SEC61-gamma family. In terms of assembly, component of the Sec protein translocase complex. Heterotrimer consisting of SecY (alpha), SecG (beta) and SecE (gamma) subunits. The heterotrimers can form oligomers, although 1 heterotrimer is thought to be able to translocate proteins. Interacts with the ribosome. May interact with SecDF, and other proteins may be involved.

The protein localises to the cell membrane. Its function is as follows. Essential subunit of the Sec protein translocation channel SecYEG. Clamps together the 2 halves of SecY. May contact the channel plug during translocation. This Saccharolobus solfataricus (strain ATCC 35092 / DSM 1617 / JCM 11322 / P2) (Sulfolobus solfataricus) protein is Protein translocase subunit SecE.